Here is a 122-residue protein sequence, read N- to C-terminus: Large ribosomal subunit protein uL14 (122 aa).

Belongs to the universal ribosomal protein uL14 family. Part of the 50S ribosomal subunit. Forms a cluster with proteins L3 and L19. In the 70S ribosome, L14 and L19 interact and together make contacts with the 16S rRNA in bridges B5 and B8.

Binds to 23S rRNA. Forms part of two intersubunit bridges in the 70S ribosome. The polypeptide is Large ribosomal subunit protein uL14 (Symbiobacterium thermophilum (strain DSM 24528 / JCM 14929 / IAM 14863 / T)).